We begin with the raw amino-acid sequence, 335 residues long: Adenine deaminase (335 aa).

Positions 14, 16, and 194 each coordinate Zn(2+). Glu-197 acts as the Proton donor in catalysis. Residue Asp-275 coordinates Zn(2+). Asp-276 serves as a coordination point for substrate.

The protein belongs to the metallo-dependent hydrolases superfamily. Adenosine and AMP deaminases family. Adenine deaminase type 2 subfamily. Zn(2+) is required as a cofactor.

It catalyses the reaction adenine + H2O + H(+) = hypoxanthine + NH4(+). Catalyzes the hydrolytic deamination of adenine to hypoxanthine. Plays an important role in the purine salvage pathway and in nitrogen catabolism. This is Adenine deaminase from Chlorobium phaeobacteroides (strain BS1).